Consider the following 372-residue polypeptide: Forkhead box protein F1-B (372 aa).

The tract at residues 1 to 51 is disordered; that stretch reads MTAEIQQPPSQPPAQSSPMSAATDKHGGQPSAMESASCATKTKKTNAGIRR. The segment covering 13–22 has biased composition (low complexity); sequence PAQSSPMSAA. The fork-head DNA-binding region spans 54 to 148; that stretch reads KPPYSYIALI…EEGSFRRRPR (95 aa).

In terms of tissue distribution, at the late gastrula stage, expressed in the presumptive ventrolateral mesoderm. During neurulation and tailbud stages, expressed in the lateral plate mesoderm and in the neural crest-derived structures of the head and branchial arches. During tailbud stages, expressed in the pronephros and pronephros ducts and in cells that migrate from the dorsolateral plate to the ventral region of the embryo (with the notable exception of the heart). These cells may represent hematopoietic or endothelial progenitor cells.

It localises to the nucleus. In terms of biological role, probable transcription factor. Required for smooth muscle (visceral mesoderm) differentiation during gut development. Also required for normal proliferation of the lateral plate mesoderm. Acts as a downstream mediator of bmp4-signaling. The protein is Forkhead box protein F1-B (foxf1-b) of Xenopus laevis (African clawed frog).